Consider the following 1358-residue polypeptide: DNA-directed RNA polymerase subunit beta (1358 aa).

The protein belongs to the RNA polymerase beta chain family. As to quaternary structure, the RNAP catalytic core consists of 2 alpha, 1 beta, 1 beta' and 1 omega subunit. When a sigma factor is associated with the core the holoenzyme is formed, which can initiate transcription.

It carries out the reaction RNA(n) + a ribonucleoside 5'-triphosphate = RNA(n+1) + diphosphate. Its function is as follows. DNA-dependent RNA polymerase catalyzes the transcription of DNA into RNA using the four ribonucleoside triphosphates as substrates. The protein is DNA-directed RNA polymerase subunit beta of Xanthobacter autotrophicus (strain ATCC BAA-1158 / Py2).